The chain runs to 170 residues: Peptide deformylase (170 aa).

Residues Cys-94 and His-136 each contribute to the Fe cation site. Glu-137 is an active-site residue. His-140 serves as a coordination point for Fe cation.

Belongs to the polypeptide deformylase family. It depends on Fe(2+) as a cofactor.

It carries out the reaction N-terminal N-formyl-L-methionyl-[peptide] + H2O = N-terminal L-methionyl-[peptide] + formate. Removes the formyl group from the N-terminal Met of newly synthesized proteins. Requires at least a dipeptide for an efficient rate of reaction. N-terminal L-methionine is a prerequisite for activity but the enzyme has broad specificity at other positions. The polypeptide is Peptide deformylase (Xylella fastidiosa (strain 9a5c)).